Here is a 352-residue protein sequence, read N- to C-terminus: Histidinol-phosphate aminotransferase (352 aa).

Position 208 is an N6-(pyridoxal phosphate)lysine (lysine 208).

This sequence belongs to the class-II pyridoxal-phosphate-dependent aminotransferase family. Histidinol-phosphate aminotransferase subfamily. As to quaternary structure, homodimer. Requires pyridoxal 5'-phosphate as cofactor.

The catalysed reaction is L-histidinol phosphate + 2-oxoglutarate = 3-(imidazol-4-yl)-2-oxopropyl phosphate + L-glutamate. The protein operates within amino-acid biosynthesis; L-histidine biosynthesis; L-histidine from 5-phospho-alpha-D-ribose 1-diphosphate: step 7/9. The protein is Histidinol-phosphate aminotransferase of Streptococcus sanguinis (strain SK36).